The sequence spans 89 residues: Small ribosomal subunit protein uS15 (89 aa).

The protein belongs to the universal ribosomal protein uS15 family. As to quaternary structure, part of the 30S ribosomal subunit. Forms a bridge to the 50S subunit in the 70S ribosome, contacting the 23S rRNA.

One of the primary rRNA binding proteins, it binds directly to 16S rRNA where it helps nucleate assembly of the platform of the 30S subunit by binding and bridging several RNA helices of the 16S rRNA. In terms of biological role, forms an intersubunit bridge (bridge B4) with the 23S rRNA of the 50S subunit in the ribosome. This Chlorobaculum parvum (strain DSM 263 / NCIMB 8327) (Chlorobium vibrioforme subsp. thiosulfatophilum) protein is Small ribosomal subunit protein uS15.